The sequence spans 255 residues: uncharacterized protein (255 aa).

Positions 122 and 160 each coordinate [4Fe-4S] cluster.

In terms of assembly, homodimer. [4Fe-4S] cluster is required as a cofactor.

This is an uncharacterized protein from Escherichia coli (strain K12).